A 235-amino-acid chain; its full sequence is Riboflavin kinase (235 aa).

Residues threonine 45 and asparagine 47 each coordinate Mg(2+). Catalysis depends on glutamate 140, which acts as the Nucleophile.

It belongs to the flavokinase family. Zn(2+) is required as a cofactor. Requires Mg(2+) as cofactor.

It catalyses the reaction riboflavin + ATP = FMN + ADP + H(+). Its pathway is cofactor biosynthesis; FMN biosynthesis; FMN from riboflavin (ATP route): step 1/1. Catalyzes the phosphorylation of riboflavin (vitamin B2) to form flavin mononucleotide (FMN) coenzyme. The polypeptide is Riboflavin kinase (FMN1) (Chaetomium globosum (strain ATCC 6205 / CBS 148.51 / DSM 1962 / NBRC 6347 / NRRL 1970) (Soil fungus)).